A 129-amino-acid polypeptide reads, in one-letter code: Small ribosomal subunit protein eS8 (129 aa).

A disordered region spans residues 1–29 (MSVWQGRSRRKPTGGLYRPARKKRKYEMG).

It belongs to the eukaryotic ribosomal protein eS8 family. In terms of assembly, part of the 30S ribosomal subunit.

The sequence is that of Small ribosomal subunit protein eS8 (rps8e) from Methanocaldococcus jannaschii (strain ATCC 43067 / DSM 2661 / JAL-1 / JCM 10045 / NBRC 100440) (Methanococcus jannaschii).